The sequence spans 350 residues: tRNA N6-adenosine threonylcarbamoyltransferase (350 aa).

Residues His109 and His113 each coordinate Fe cation. Residues 136–140, Asp169, Gly182, Asp186, and Asn284 contribute to the substrate site; that span reads TVSGG. Asp312 serves as a coordination point for Fe cation.

It belongs to the KAE1 / TsaD family. Fe(2+) serves as cofactor.

It is found in the cytoplasm. It catalyses the reaction L-threonylcarbamoyladenylate + adenosine(37) in tRNA = N(6)-L-threonylcarbamoyladenosine(37) in tRNA + AMP + H(+). Functionally, required for the formation of a threonylcarbamoyl group on adenosine at position 37 (t(6)A37) in tRNAs that read codons beginning with adenine. Is involved in the transfer of the threonylcarbamoyl moiety of threonylcarbamoyl-AMP (TC-AMP) to the N6 group of A37, together with TsaE and TsaB. TsaD likely plays a direct catalytic role in this reaction. The polypeptide is tRNA N6-adenosine threonylcarbamoyltransferase (Pelodictyon phaeoclathratiforme (strain DSM 5477 / BU-1)).